Here is a 352-residue protein sequence, read N- to C-terminus: MSASTTATLRHDWTLAEVRALFVQPFNDLLFQAQTVHRAHFDANRVQVSTLLSIKTGACPEDCKYCPQSGHYNTGLEKEKLLEVQKVLEEAARAKAIGSTRFCMGAAWKHPSAKDMPYVLEMVKGVKAMGMETCMTLGRLDQEQTEALATAGLDYYNHNLDTSPEFYGSIITTRTYSERLQTLAYVRDAGMKICSGGILGMGESLDDRAGLLIQLANLPEHPESVPINMLVKVAGTPLENAEDVDPFDFIRMLAVARILMPKSHVRLSAGREAMNEQMQALAFFAGANSIFYGDKLLTTANPQADKDMLLFSRLGIKPEAGEGHADEVHQAAIEQALVEQQSSSMFYDAASA.

Positions Asn-44–Lys-262 constitute a Radical SAM core domain. Residues Cys-59, Cys-63, and Cys-66 each coordinate [4Fe-4S] cluster. [2Fe-2S] cluster contacts are provided by Cys-103, Cys-134, Cys-194, and Arg-266.

Belongs to the radical SAM superfamily. Biotin synthase family. As to quaternary structure, homodimer. Requires [4Fe-4S] cluster as cofactor. It depends on [2Fe-2S] cluster as a cofactor.

It catalyses the reaction (4R,5S)-dethiobiotin + (sulfur carrier)-SH + 2 reduced [2Fe-2S]-[ferredoxin] + 2 S-adenosyl-L-methionine = (sulfur carrier)-H + biotin + 2 5'-deoxyadenosine + 2 L-methionine + 2 oxidized [2Fe-2S]-[ferredoxin]. The protein operates within cofactor biosynthesis; biotin biosynthesis; biotin from 7,8-diaminononanoate: step 2/2. Catalyzes the conversion of dethiobiotin (DTB) to biotin by the insertion of a sulfur atom into dethiobiotin via a radical-based mechanism. In Pseudomonas syringae pv. syringae (strain B728a), this protein is Biotin synthase.